A 265-amino-acid polypeptide reads, in one-letter code: Transglycosylase (265 aa).

The interval 19–98 (NLDPRLVAGV…NTALLAYHGG (80 aa)) is slt-type domain. The active site involves E32. The chain crosses the membrane as a helical span at residues 219 to 239 (LRGVVIIAAVAIVVVGLYFLF).

Belongs to the transglycosylase Slt family. As to quaternary structure, heteromultimer composed of proteins P7 and P14.

The protein resides in the virion membrane. It catalyses the reaction Exolytic cleavage of the (1-&gt;4)-beta-glycosidic linkage between N-acetylmuramic acid (MurNAc) and N-acetylglucosamine (GlcNAc) residues in peptidoglycan, from either the reducing or the non-reducing ends of the peptidoglycan chains, with concomitant formation of a 1,6-anhydrobond in the MurNAc residue.. Its function is as follows. Component of the phage ejection machinery which acts as an exolysin. Muralytic protein involved in host peptidoglycan digestion necessary for viral DNA entry into the host cell. In terms of biological role, does not display any enzymatic activity. Required for DNA injection in the membrane transformation event. Involved in the formation of the membrane tail tube to connect the virus interior with the host cytosol. Essential for viral infectivity. This is Transglycosylase (VII) from Acinetobacter calcoaceticus (Arthrobacter siderocapsulatus).